The primary structure comprises 178 residues: Inorganic pyrophosphatase (178 aa).

Residues Lys-30, Arg-44, and Tyr-56 each contribute to the substrate site. Mg(2+)-binding residues include Asp-66, Asp-71, and Asp-103. Position 140 (Tyr-140) interacts with substrate.

Belongs to the PPase family. As to quaternary structure, homohexamer. Mg(2+) is required as a cofactor.

It localises to the cytoplasm. The enzyme catalyses diphosphate + H2O = 2 phosphate + H(+). Catalyzes the hydrolysis of inorganic pyrophosphate (PPi) forming two phosphate ions. The polypeptide is Inorganic pyrophosphatase (Pyrococcus abyssi (strain GE5 / Orsay)).